The chain runs to 125 residues: MLSRLLKEHQAKQNERKELQEKRRREAITAATCLTEALVDHLNVGVAQAYMNQRKLDHEVKTLQVQAAQFAKQTGQWIGMVENFNQALKEIGDVENWARSIELDMRTIATALEYVYKGQLQSAPS.

The stretch at 1-31 (MLSRLLKEHQAKQNERKELQEKRRREAITAA) forms a coiled coil.

This sequence belongs to the BLOC1S1 family. As to quaternary structure, component of the biogenesis of lysosome-related organelles complex 1 (BLOC-1) composed of BLOC1S1, BLOC1S2, BLOC1S3, BLOC1S4, BLOC1S5, BLOC1S6, DTNBP1/BLOC1S7 and SNAPIN/BLOC1S8. Octamer composed of one copy each BLOC1S1, BLOC1S2, BLOC1S3, BLOC1S4, BLOC1S5, BLOC1S6, DTNBP1/BLOC1S7 and SNAPIN/BLOC1S8. The BLOC-1 complex associates with the AP-3 protein complex and membrane protein cargos. Component of the BLOC-one-related complex (BORC) which is composed of BLOC1S1, BLOC1S2, BORCS5, BORCS6, BORCS7, BORCS8, KXD1 and SNAPIN. Interacts with ATP5F1A and NDUFA9; involved in their acetylation on lysine residues. Interacts with KXD1.

The protein resides in the mitochondrion intermembrane space. It is found in the mitochondrion matrix. The protein localises to the cytoplasm. Its subcellular location is the cytosol. It localises to the lysosome membrane. It catalyses the reaction L-lysyl-[protein] + acetyl-CoA = N(6)-acetyl-L-lysyl-[protein] + CoA + H(+). Functionally, component of the BLOC-1 complex, a complex that is required for normal biogenesis of lysosome-related organelles (LRO), such as platelet dense granules and melanosomes. In concert with the AP-3 complex, the BLOC-1 complex is required to target membrane protein cargos into vesicles assembled at cell bodies for delivery into neurites and nerve terminals. The BLOC-1 complex, in association with SNARE proteins, is also proposed to be involved in neurite extension. As part of the BORC complex may play a role in lysosomes movement and localization at the cell periphery. The BORC complex is most probably associated with the cytosolic face of lysosomes, may recruit ARL8B and couple lysosomes to microtubule plus-end-directed kinesin motor. In terms of biological role, acts as a protein acetyltransferase. Negatively regulates aerobic respiration through mitochondrial protein lysine-acetylation. May counteract the action of the deacetylase SIRT3 by acetylating and regulating proteins of the mitochondrial respiratory chain including ATP5F1A and NDUFA9. Acts as a regulator of mTORC2 signaling in response to hypotoxic stress by mediating acetylation of RICTOR, thereby protecting RICTOR against ubiquitination and subsequent degradation by the proteasome. This is Biogenesis of lysosome-related organelles complex 1 subunit 1 (BLOC1S1) from Bos taurus (Bovine).